A 249-amino-acid chain; its full sequence is tRNA pseudouridine synthase A (249 aa).

Aspartate 53 serves as the catalytic Nucleophile. Tyrosine 111 contacts substrate.

The protein belongs to the tRNA pseudouridine synthase TruA family. Homodimer.

The enzyme catalyses uridine(38/39/40) in tRNA = pseudouridine(38/39/40) in tRNA. Its function is as follows. Formation of pseudouridine at positions 38, 39 and 40 in the anticodon stem and loop of transfer RNAs. In Streptococcus equi subsp. equi (strain 4047), this protein is tRNA pseudouridine synthase A.